The chain runs to 247 residues: ATP synthase subunit a, chloroplastic (247 aa).

5 consecutive transmembrane segments (helical) span residues 38–58 (QVLI…IIAV), 95–115 (VPFI…GALL), 134–154 (INTT…AGLS), 199–219 (LVVV…VMFL), and 220–240 (GLFT…AYIG).

Belongs to the ATPase A chain family. As to quaternary structure, F-type ATPases have 2 components, CF(1) - the catalytic core - and CF(0) - the membrane proton channel. CF(1) has five subunits: alpha(3), beta(3), gamma(1), delta(1), epsilon(1). CF(0) has four main subunits: a, b, b' and c.

It localises to the plastid. The protein resides in the chloroplast thylakoid membrane. In terms of biological role, key component of the proton channel; it plays a direct role in the translocation of protons across the membrane. The chain is ATP synthase subunit a, chloroplastic from Cucumis sativus (Cucumber).